A 201-amino-acid polypeptide reads, in one-letter code: uncharacterized protein (201 aa).

Positions 1–23 (MKILYFIFVIIINILLILNHVKS) are cleaved as a signal peptide. Over 24–178 (KYNTFIFENT…GNYGEDPQRN (155 aa)) the chain is Extracellular. N-linked (GlcNAc...) asparagine glycans are attached at residues Asn114 and Asn134. The interval 122–157 (TPETPSPTENAPNTSGGSSEGNHYTYKSSSSSSEHI) is disordered. Residues 123 to 148 (PETPSPTENAPNTSGGSSEGNHYTYK) show a composition bias toward polar residues. The chain crosses the membrane as a helical span at residues 179-199 (IGISLSSSLIFISILFLIIFI). Topologically, residues 200-201 (NN) are cytoplasmic.

Its subcellular location is the membrane. This is an uncharacterized protein from Dictyostelium discoideum (Social amoeba).